Reading from the N-terminus, the 403-residue chain is F-box protein At2g40925 (403 aa).

One can recognise an F-box domain in the interval 21 to 71 (NRHDCEIPPDLMIEILIRLPTKSFMRFKCVSKQWSPLISGRYFCNRLFTCV).

The sequence is that of F-box protein At2g40925 from Arabidopsis thaliana (Mouse-ear cress).